A 451-amino-acid polypeptide reads, in one-letter code: Bifunctional protein GlmU (451 aa).

A pyrophosphorylase region spans residues 1–225 (MSLAVVILAA…EFEIQGVNDR (225 aa)). UDP-N-acetyl-alpha-D-glucosamine-binding positions include 8–11 (LAAG), lysine 22, glutamine 73, 78–79 (GT), 99–101 (YGD), glycine 135, glutamate 150, asparagine 165, and asparagine 223. Aspartate 101 provides a ligand contact to Mg(2+). Asparagine 223 contributes to the Mg(2+) binding site. The segment at 226-246 (IQLAQLEREWQKHIAEVIMSK) is linker. The N-acetyltransferase stretch occupies residues 247–451 (GVSVADPSRI…IDTWQRPVKK (205 aa)). Residues arginine 329 and lysine 347 each coordinate UDP-N-acetyl-alpha-D-glucosamine. The active-site Proton acceptor is histidine 359. UDP-N-acetyl-alpha-D-glucosamine is bound by residues tyrosine 362 and asparagine 373. Residues alanine 376, 382–383 (NY), serine 401, alanine 419, and arginine 436 contribute to the acetyl-CoA site.

This sequence in the N-terminal section; belongs to the N-acetylglucosamine-1-phosphate uridyltransferase family. In the C-terminal section; belongs to the transferase hexapeptide repeat family. Homotrimer. It depends on Mg(2+) as a cofactor.

It is found in the cytoplasm. It carries out the reaction alpha-D-glucosamine 1-phosphate + acetyl-CoA = N-acetyl-alpha-D-glucosamine 1-phosphate + CoA + H(+). The enzyme catalyses N-acetyl-alpha-D-glucosamine 1-phosphate + UTP + H(+) = UDP-N-acetyl-alpha-D-glucosamine + diphosphate. It functions in the pathway nucleotide-sugar biosynthesis; UDP-N-acetyl-alpha-D-glucosamine biosynthesis; N-acetyl-alpha-D-glucosamine 1-phosphate from alpha-D-glucosamine 6-phosphate (route II): step 2/2. It participates in nucleotide-sugar biosynthesis; UDP-N-acetyl-alpha-D-glucosamine biosynthesis; UDP-N-acetyl-alpha-D-glucosamine from N-acetyl-alpha-D-glucosamine 1-phosphate: step 1/1. The protein operates within bacterial outer membrane biogenesis; LPS lipid A biosynthesis. In terms of biological role, catalyzes the last two sequential reactions in the de novo biosynthetic pathway for UDP-N-acetylglucosamine (UDP-GlcNAc). The C-terminal domain catalyzes the transfer of acetyl group from acetyl coenzyme A to glucosamine-1-phosphate (GlcN-1-P) to produce N-acetylglucosamine-1-phosphate (GlcNAc-1-P), which is converted into UDP-GlcNAc by the transfer of uridine 5-monophosphate (from uridine 5-triphosphate), a reaction catalyzed by the N-terminal domain. The chain is Bifunctional protein GlmU from Francisella philomiragia subsp. philomiragia (strain ATCC 25017 / CCUG 19701 / FSC 153 / O#319-036).